The sequence spans 325 residues: Urease accessory protein UreD (325 aa).

The protein belongs to the UreD family. In terms of assembly, ureD, UreF and UreG form a complex that acts as a GTP-hydrolysis-dependent molecular chaperone, activating the urease apoprotein by helping to assemble the nickel containing metallocenter of UreC. The UreE protein probably delivers the nickel.

Its subcellular location is the cytoplasm. Required for maturation of urease via the functional incorporation of the urease nickel metallocenter. Its function is as follows. Expression of the urease operon increases the likelihood of bacterial survival by contributing to acid resistance in vitro and in vivo in BALB/c mice. Y.enterocolitica enters the body via an oral path and must survive the acidic stomach before being able to colonize the intestinal mucosa. This is Urease accessory protein UreD from Yersinia enterocolitica.